Reading from the N-terminus, the 492-residue chain is MDLSKFRPSSAYDSPFLTTNAGGPVYNNVSSLTVGPRGPVLLEDYHLIEKLATFDRERIPERVVHARGASAKGFFEVTHDISHLTCADFLRAPGVQTPVICRFSTVVHERGSPESLRDIRGFAVKFYTREGNFDLVGNNVPVFFNRDAKSFPDTIRALKPNPKSHIQEYWKILDFFSFLPESLHTFAWFFDDVCLPTDYRHMEGYGVHAYQLINKAGKAHYVKFHWKPTCGVKCMSEEEAIRVGGTNHSHATKDLYDSIAAGNYPEWKLFIQIMDTEDVDKFDFDPLDVTKTWPEDILPLMPVGRLVLNRNIDNFFAENEQLAFNPGHIVPGLYYSEDKLLQTRIFAYADTQRHRIGPNYMQLPVNAPKCAHHNNHRDGAMNFMHRDEEVDYLPSRFDPCRHAEQYPIPSRVLTGRREMCVIEKENNFKQAGERYRSWEPDRQDRYVSKWVEHLSDPRVTYEIRSIWISYLSQADKSCGQKVASRLTLKPTM.

Catalysis depends on residues His65 and Asn138. Tyr348 contributes to the heme binding site.

This sequence belongs to the catalase family. As to quaternary structure, homotetramer. It depends on heme as a cofactor.

It is found in the cytoplasm. It localises to the cytosol. Its subcellular location is the peroxisome matrix. The catalysed reaction is 2 H2O2 = O2 + 2 H2O. Its activity is regulated as follows. Inhibited by salicylic acid. Functionally, catalyzes the degradation of hydrogen peroxide (H(2)O(2)) generated by peroxisomal oxidases to water and oxygen, thereby protecting cells from the toxic effects of hydrogen peroxide. The protein is Catalase isozyme 1 (CAT-1) of Nicotiana tabacum (Common tobacco).